The chain runs to 202 residues: Outer-membrane lipoprotein carrier protein (202 aa).

The signal sequence occupies residues 1-20 (MKKQLLIGSVLLVASSQVWA).

It belongs to the LolA family. In terms of assembly, monomer.

The protein localises to the periplasm. In terms of biological role, participates in the translocation of lipoproteins from the inner membrane to the outer membrane. Only forms a complex with a lipoprotein if the residue after the N-terminal Cys is not an aspartate (The Asp acts as a targeting signal to indicate that the lipoprotein should stay in the inner membrane). The chain is Outer-membrane lipoprotein carrier protein from Aeromonas salmonicida (strain A449).